A 131-amino-acid polypeptide reads, in one-letter code: Interleukin-13 (131 aa).

A signal peptide spans 1-18 (MALWVTAVLALACLGGLA). N-linked (GlcNAc...) asparagine glycans are attached at residues asparagine 42, asparagine 52, and asparagine 75. Cystine bridges form between cysteine 51–cysteine 79 and cysteine 67–cysteine 93.

The protein belongs to the IL-4/IL-13 family. In terms of assembly, interacts with IL13RA2.

The protein resides in the secreted. In terms of biological role, cytokine that plays important roles in allergic inflammation and immune response to parasite infection. Synergizes with IL2 in regulating interferon-gamma synthesis. Stimulates B-cell proliferation, and activation of eosinophils, basophils, and mast cells. Plays an important role in controlling IL33 activity by modulating the production of transmembrane and soluble forms of interleukin-1 receptor-like 1/IL1RL1. Displays the capacity to antagonize Th1-driven proinflammatory immune response and downregulates synthesis of many proinflammatory cytokines including IL1, IL6, IL10, IL12 and TNF-alpha through a mechanism that partially involves suppression of NF-kappa-B. Also functions on nonhematopoietic cells, including endothelial cells where it induces vascular cell adhesion protein 1/VCAM1, which is important in the recruitment of eosinophils. Exerts its biological effects through its receptors which comprises the IL4R chain and the IL13RA1 chain, to activate JAK1 and TYK2, leading to the activation of STAT6. Aside from IL13RA1, another receptor IL13RA2 acts as a high affinity decoy for IL13 and mediates internalization and depletion of extracellular IL13. This Mus musculus (Mouse) protein is Interleukin-13 (Il13).